Here is a 132-residue protein sequence, read N- to C-terminus: Small ribosomal subunit protein uS11 (132 aa).

This sequence belongs to the universal ribosomal protein uS11 family. As to quaternary structure, part of the 30S ribosomal subunit. Interacts with proteins S7 and S18. Binds to IF-3.

Functionally, located on the platform of the 30S subunit, it bridges several disparate RNA helices of the 16S rRNA. Forms part of the Shine-Dalgarno cleft in the 70S ribosome. The sequence is that of Small ribosomal subunit protein uS11 from Cyanothece sp. (strain PCC 7425 / ATCC 29141).